The sequence spans 378 residues: Histidinol-phosphate aminotransferase 2 (378 aa).

K240 is subject to N6-(pyridoxal phosphate)lysine.

It belongs to the class-II pyridoxal-phosphate-dependent aminotransferase family. Histidinol-phosphate aminotransferase subfamily. As to quaternary structure, homodimer. Pyridoxal 5'-phosphate is required as a cofactor.

The enzyme catalyses L-histidinol phosphate + 2-oxoglutarate = 3-(imidazol-4-yl)-2-oxopropyl phosphate + L-glutamate. The protein operates within amino-acid biosynthesis; L-histidine biosynthesis; L-histidine from 5-phospho-alpha-D-ribose 1-diphosphate: step 7/9. This Caulobacter vibrioides (strain ATCC 19089 / CIP 103742 / CB 15) (Caulobacter crescentus) protein is Histidinol-phosphate aminotransferase 2 (hisC2).